The sequence spans 315 residues: Fe(3+)-citrate-binding protein YfmC (315 aa).

The N-terminal stretch at M1–A18 is a signal peptide. C19 carries N-palmitoyl cysteine lipidation. C19 carries the S-diacylglycerol cysteine lipid modification. Residues S27–K36 show a composition bias toward low complexity. Residues S27–T52 form a disordered region. The span at S37–K51 shows a compositional bias: basic and acidic residues. Residues R60 to K315 enclose the Fe/B12 periplasmic-binding domain.

Belongs to the bacterial solute-binding protein 8 family. As to quaternary structure, the complex is composed of one ATP-binding protein (YfmF), two transmembrane proteins (YfmD and YfmE) and a solute-binding protein (YfmC).

It localises to the cell membrane. Functionally, part of the ABC transporter complex YfmCDEF involved in citrate-dependent Fe(3+) import. Binds citrate-dependent Fe(3+) and delivers it to the surface of YfmDE. This is Fe(3+)-citrate-binding protein YfmC (yfmC) from Bacillus subtilis (strain 168).